The chain runs to 600 residues: MENSSAASASSEAGSSRSQEIEELERFIDSYVLEYQVQGLLTDKTEGDGESQRTQSHISQWTADCREQLDGSCSFSRGRAPPQQNGNKDNSLDMLGTDIWAANTFDSFSGATWDLQPEKLDFTQFHRKVRHTPKQPLPHIDREGCGKGKLEDGDGISLNDIEKVLPTWQGYHPMPHEAEIAHTKKLFRRRRNDRRRQQRPPGGNKPQQHGDHQPGSAKHNRDHQKSYQGGSGPHPSGRPTHHGYSQNRRWHHGNMKHPPGDKGEAGSHRNAKETVTVENPKLEDGPGDTGHSGLEPPCSPDTLTPAASERPTPQLPGGPEAEIKHKDTVLPERLRERPKITLLQSSKDRLRRRLKEKDRDEVAVETSSPQPSKMDRLMEILNIMRNNSSDVDAKLTSFMEEAQNSTNSEEMLGEIVRTIYQKAVSDRSFAFTAAKLCDKMALFMVEGTKFRSLLLNMLQKDFTVREELQQQDVERWLGFITFLCEVFGTMRSSTGEPFRVLVCPIYTCLRELLQSQDVKEDAVLCCSMELQSTGRLLEEQLPEMMTELLASARDKMLCPSESMLTRSLLLEVIELHANSWNPLTPPITQYYNRTIQKLTA.

Residue methionine 1 is modified to N-acetylmethionine. A compositionally biased stretch (low complexity) spans methionine 1 to serine 18. Disordered stretches follow at residues methionine 1–glutamate 20, aspartate 43–threonine 62, lysine 134–aspartate 154, and proline 175–glutamine 370. Residues methionine 1–proline 305 form an interaction with NCBP1/CBP80 region. Serine 18 carries the phosphoserine modification. Residues glutamine 52–threonine 62 show a composition bias toward polar residues. A compositionally biased stretch (basic and acidic residues) spans histidine 139–aspartate 152. A compositionally biased stretch (basic residues) spans threonine 183–glutamine 198. The span at proline 258 to lysine 272 shows a compositional bias: basic and acidic residues. A Phosphothreonine modification is found at threonine 289. The residue at position 299 (serine 299) is a Phosphoserine. Residues alanine 321 to lysine 339 are compositionally biased toward basic and acidic residues. Residues methionine 378 to serine 579 enclose the MIF4G domain.

Belongs to the CTIF family. In terms of assembly, interacts with NCBP1/CBP80; the interaction is direct. Associates with the eukaryotic translation initiation factor 3 (eIF-3) complex. Widely expressed.

The protein resides in the cytoplasm. Its subcellular location is the perinuclear region. In terms of biological role, specifically required for the pioneer round of mRNA translation mediated by the cap-binding complex (CBC), that takes place during or right after mRNA export via the nuclear pore complex (NPC). Acts via its interaction with the NCBP1/CBP80 component of the CBC complex and recruits the 40S small subunit of the ribosome via eIF3. In contrast, it is not involved in steady state translation, that takes place when the CBC complex is replaced by cytoplasmic cap-binding protein eIF4E. Also required for nonsense-mediated mRNA decay (NMD), the pioneer round of mRNA translation mediated by the cap-binding complex playing a central role in nonsense-mediated mRNA decay (NMD). The polypeptide is CBP80/20-dependent translation initiation factor (Ctif) (Mus musculus (Mouse)).